The following is a 243-amino-acid chain: MGQTAGDLGWRLSLLLLPLLLVQAGVWGFPRPPGRPQLSLQELRREFTVSLHLARKLLSEVRGQAHRFAESHLPGVNLYLLPLGEQLPDVSLTFQAWRRLSDPERLCFISTTLQPFHALLGGLGTQGRWTNMERMQLWAMRLDLRDLQRHLRFQVLAAGFNLPEEEEEEEEEEEEERKGLLPGALGSALQGPAQVSWPQLLSTYRLLHSLELVLSRAVRELLLLSKAGHSVWPLGFPTLSPQP.

A signal peptide spans 1-28 (MGQTAGDLGWRLSLLLLPLLLVQAGVWG).

It belongs to the IL-6 superfamily. Heterodimer with EBI3; not disulfide-linked. This heterodimer is known as interleukin IL-27. In terms of processing, O-glycosylated. Expressed in monocytes and in placenta.

The protein localises to the secreted. Associates with EBI3 to form the IL-27 interleukin, a heterodimeric cytokine which functions in innate immunity. IL-27 has pro- and anti-inflammatory properties, that can regulate T-helper cell development, suppress T-cell proliferation, stimulate cytotoxic T-cell activity, induce isotype switching in B-cells, and that has diverse effects on innate immune cells. Among its target cells are CD4 T-helper cells which can differentiate in type 1 effector cells (TH1), type 2 effector cells (TH2) and IL17 producing helper T-cells (TH17). It drives rapid clonal expansion of naive but not memory CD4 T-cells. It also strongly synergizes with IL-12 to trigger interferon-gamma/IFN-gamma production of naive CD4 T-cells, binds to the cytokine receptor WSX-1/TCCR which appears to be required but not sufficient for IL-27-mediated signal transduction. IL-27 potentiate the early phase of TH1 response and suppress TH2 and TH17 differentiation. It induces the differentiation of TH1 cells via two distinct pathways, p38 MAPK/TBX21- and ICAM1/ITGAL/ERK-dependent pathways. It also induces STAT1, STAT3, STAT4 and STAT5 phosphorylation and activates TBX21/T-Bet via STAT1 with resulting IL12RB2 up-regulation, an event crucial to TH1 cell commitment. It suppresses the expression of GATA3, the inhibitor TH1 cells development. In CD8 T-cells, it activates STATs as well as GZMB. IL-27 reveals to be a potent inhibitor of TH17 cell development and of IL-17 production. Indeed IL27 alone is also able to inhibit the production of IL17 by CD4 and CD8 T-cells. While IL-27 suppressed the development of pro-inflammatory Th17 cells via STAT1, it inhibits the development of anti-inflammatory inducible regulatory T-cells, iTreg, independently of STAT1. IL-27 also has an effect on cytokine production, it suppresses pro-inflammatory cytokine production such as IL2, IL4, IL5 and IL6 and activates suppressors of cytokine signaling such as SOCS1 and SOCS3. Apart from suppression of cytokine production, IL-27 also antagonizes the effects of some cytokines such as IL6 through direct effects on T-cells. Another important role of IL-27 is its antitumor activity as well as its antiangiogenic activity with activation of production of antiangiogenic chemokines such as IP-10/CXCL10 and MIG/CXCL9. In vein endothelial cells, it induces IRF1/interferon regulatory factor 1 and increase the expression of MHC class II transactivator/CIITA with resulting up-regulation of major histocompatibility complex class II. IL-27 also demonstrates antiviral activity with inhibitory properties on HIV-1 replication. The polypeptide is Interleukin-27 subunit alpha (IL27) (Homo sapiens (Human)).